Consider the following 458-residue polypeptide: Mitochondrial distribution and morphology protein 10 (458 aa).

The segment at 307 to 339 is disordered; sequence LDQRRTEPLDAPNTNSSVFSKERVQKKQGPKED. A compositionally biased stretch (basic and acidic residues) spans 326-339; sequence SKERVQKKQGPKED.

The protein belongs to the MDM10 family. Component of the ER-mitochondria encounter structure (ERMES) or MDM complex, composed of MMM1, MDM10, MDM12 and MDM34. Associates with the mitochondrial outer membrane sorting assembly machinery SAM(core) complex.

The protein localises to the mitochondrion outer membrane. Component of the ERMES/MDM complex, which serves as a molecular tether to connect the endoplasmic reticulum and mitochondria. Components of this complex are involved in the control of mitochondrial shape and protein biogenesis and may function in phospholipid exchange. MDM10 is involved in the late assembly steps of the general translocase of the mitochondrial outer membrane (TOM complex). Functions in the TOM40-specific route of the assembly of outer membrane beta-barrel proteins, including the association of TOM40 with the receptor TOM22 and small TOM proteins. Can associate with the SAM(core) complex as well as the MDM12-MMM1 complex, both involved in late steps of the major beta-barrel assembly pathway, that is responsible for biogenesis of all outer membrane beta-barrel proteins. May act as a switch that shuttles between both complexes and channels precursor proteins into the TOM40-specific pathway. Plays a role in mitochondrial morphology and in the inheritance of mitochondria. The protein is Mitochondrial distribution and morphology protein 10 of Lachancea thermotolerans (strain ATCC 56472 / CBS 6340 / NRRL Y-8284) (Yeast).